Consider the following 132-residue polypeptide: Ribosome-binding factor A (132 aa).

This sequence belongs to the RbfA family. In terms of assembly, monomer. Binds 30S ribosomal subunits, but not 50S ribosomal subunits or 70S ribosomes.

The protein localises to the cytoplasm. Its function is as follows. One of several proteins that assist in the late maturation steps of the functional core of the 30S ribosomal subunit. Associates with free 30S ribosomal subunits (but not with 30S subunits that are part of 70S ribosomes or polysomes). Required for efficient processing of 16S rRNA. May interact with the 5'-terminal helix region of 16S rRNA. The protein is Ribosome-binding factor A of Xanthomonas campestris pv. campestris (strain 8004).